The sequence spans 446 residues: tRNA(Ile2) 2-agmatinylcytidine synthetase TiaS (446 aa).

The protein belongs to the TiaS family.

The protein resides in the cytoplasm. The enzyme catalyses cytidine(34) in tRNA(Ile2) + agmatine + ATP + H2O = 2-agmatinylcytidine(34) in tRNA(Ile2) + AMP + 2 phosphate + 2 H(+). In terms of biological role, ATP-dependent agmatine transferase that catalyzes the formation of 2-agmatinylcytidine (agm2C) at the wobble position (C34) of tRNA(Ile2), converting the codon specificity from AUG to AUA. This is tRNA(Ile2) 2-agmatinylcytidine synthetase TiaS from Cenarchaeum symbiosum (strain A).